Reading from the N-terminus, the 512-residue chain is Protein maelstrom homolog (512 aa).

Positions 9–75 (AKGPFYFFMM…NPKEAGGYGE (67 aa)) form a DNA-binding region, HMG box. Disordered stretches follow at residues 49 to 72 (APHE…EAGG), 360 to 421 (RMSK…GTRA), and 439 to 465 (QSAN…DPQS). Residues 360-370 (RMSKLTTTSDN) show a composition bias toward polar residues. The span at 379–388 (RSTDRTDRDV) shows a compositional bias: basic and acidic residues. Composition is skewed to polar residues over residues 393 to 421 (IYSS…GTRA) and 439 to 449 (QSANRSPTKKN). The segment covering 451-464 (WSRENKLTEVRDPQ) has biased composition (basic and acidic residues).

It belongs to the maelstrom family.

The protein resides in the cytoplasm. Its subcellular location is the nucleus. Plays a central role during gametogenesis by repressing transposable elements and preventing their mobilization, which is essential for the germline integrity. Probably acts via the piRNA metabolic process, which mediates the repression of transposable elements during meiosis by forming complexes composed of piRNAs and Piwi proteins and governs the repression of transposons. This is Protein maelstrom homolog (mael) from Culex quinquefasciatus (Southern house mosquito).